The primary structure comprises 288 residues: Bifunctional protein FolD (288 aa).

NADP(+) contacts are provided by residues 166-168, Ser-191, and Ile-232; that span reads GRS.

Belongs to the tetrahydrofolate dehydrogenase/cyclohydrolase family. As to quaternary structure, homodimer.

The enzyme catalyses (6R)-5,10-methylene-5,6,7,8-tetrahydrofolate + NADP(+) = (6R)-5,10-methenyltetrahydrofolate + NADPH. It carries out the reaction (6R)-5,10-methenyltetrahydrofolate + H2O = (6R)-10-formyltetrahydrofolate + H(+). It participates in one-carbon metabolism; tetrahydrofolate interconversion. Its function is as follows. Catalyzes the oxidation of 5,10-methylenetetrahydrofolate to 5,10-methenyltetrahydrofolate and then the hydrolysis of 5,10-methenyltetrahydrofolate to 10-formyltetrahydrofolate. The protein is Bifunctional protein FolD of Rickettsia peacockii (strain Rustic).